The following is a 133-amino-acid chain: Ribonuclease P protein component (133 aa).

This sequence belongs to the RnpA family. In terms of assembly, consists of a catalytic RNA component (M1 or rnpB) and a protein subunit.

It carries out the reaction Endonucleolytic cleavage of RNA, removing 5'-extranucleotides from tRNA precursor.. Its function is as follows. RNaseP catalyzes the removal of the 5'-leader sequence from pre-tRNA to produce the mature 5'-terminus. It can also cleave other RNA substrates such as 4.5S RNA. The protein component plays an auxiliary but essential role in vivo by binding to the 5'-leader sequence and broadening the substrate specificity of the ribozyme. This chain is Ribonuclease P protein component, found in Pseudomonas entomophila (strain L48).